Reading from the N-terminus, the 191-residue chain is PBAN-type neuropeptides (191 aa).

Residues 1-17 (MFSPLLFFAVSISCVLA) form the signal peptide. Leu44 carries the post-translational modification Leucine amide. The propeptide occupies 48 to 91 (SLRISTEDNRQAFFKLLEAADALKYYYDRLPYEMQADEPETRVT). Residues Leu100, Leu120, Leu156, and Leu166 each carry the leucine amide modification. Positions 169–191 (ELSYDMLPSKLRLVRSTNRTQST) are excised as a propeptide.

Belongs to the pyrokinin family. As to expression, expressed in the subesophageal ganglion.

Its subcellular location is the secreted. Functionally, a hormone that controls sex pheromone production in females and pheromone responsiveness in male. The polypeptide is PBAN-type neuropeptides (Spodoptera littoralis (Egyptian cotton leafworm)).